Reading from the N-terminus, the 360-residue chain is Phospho-N-acetylmuramoyl-pentapeptide-transferase (360 aa).

Residues 1–25 (MLVWLAEHLVKYYSGFNVFSYLTFR) lie on the Periplasmic side of the membrane. The helical transmembrane segment at 26 to 46 (AIVSLLTALFISLWMGPRMIA) threads the bilayer. Residues 47 to 71 (RLQKLSFGQVVRNDGPESHFSKRGT) are Cytoplasmic-facing. A helical membrane pass occupies residues 72–92 (PTMGGIMILTSIVISVLLWAY). Position 93 (proline 93) is a topological domain, periplasmic. A helical membrane pass occupies residues 94-114 (SNPYVWCVLVVLIGYGIIGFV). The Cytoplasmic segment spans residues 115–131 (DDYRKVVRKDTKGLIAR). Residues 132–152 (WKYFWMSVIALGVAFALYLVG) form a helical membrane-spanning segment. The Periplasmic segment spans residues 153-167 (KDTPATQLVVPFFKD). Residues 168-188 (VMPQLGLFYILLSYFVIVGTG) form a helical membrane-spanning segment. Over 189–198 (NAVNLTDGLD) the chain is Cytoplasmic. A helical membrane pass occupies residues 199 to 219 (GLAIMPTVFVAAGFALVAWAT). The Periplasmic portion of the chain corresponds to 220 to 235 (GNMNFANYLHIPYLRH). The helical transmembrane segment at 236–256 (AGELVIVCTAIVGAGLGFLWF) threads the bilayer. The Cytoplasmic portion of the chain corresponds to 257-262 (NTYPAQ). Residues 263–283 (VFMGDVGSLALGGALGIIAVL) form a helical membrane-spanning segment. Over 284–287 (LRQE) the chain is Periplasmic. A helical transmembrane segment spans residues 288–308 (FLLVIMGGVFVVETLSVILQV). At 309–337 (GSFKLRGQRIFRMAPIHHHYELKGWPEPR) the chain is on the cytoplasmic side. The helical transmembrane segment at 338-358 (VIVRFWIISLMLVLIGLATLK) threads the bilayer. Over 359–360 (VR) the chain is Periplasmic.

This sequence belongs to the glycosyltransferase 4 family. MraY subfamily. It depends on Mg(2+) as a cofactor.

Its subcellular location is the cell inner membrane. It catalyses the reaction UDP-N-acetyl-alpha-D-muramoyl-L-alanyl-gamma-D-glutamyl-meso-2,6-diaminopimeloyl-D-alanyl-D-alanine + di-trans,octa-cis-undecaprenyl phosphate = di-trans,octa-cis-undecaprenyl diphospho-N-acetyl-alpha-D-muramoyl-L-alanyl-D-glutamyl-meso-2,6-diaminopimeloyl-D-alanyl-D-alanine + UMP. It participates in cell wall biogenesis; peptidoglycan biosynthesis. Its function is as follows. Catalyzes the initial step of the lipid cycle reactions in the biosynthesis of the cell wall peptidoglycan: transfers peptidoglycan precursor phospho-MurNAc-pentapeptide from UDP-MurNAc-pentapeptide onto the lipid carrier undecaprenyl phosphate, yielding undecaprenyl-pyrophosphoryl-MurNAc-pentapeptide, known as lipid I. This Salmonella gallinarum (strain 287/91 / NCTC 13346) protein is Phospho-N-acetylmuramoyl-pentapeptide-transferase.